Reading from the N-terminus, the 233-residue chain is Riboflavin kinase (233 aa).

Residues 1–104 (MVRDIKTFKF…YKKIFDDEGT (104 aa)) form an H-T-H motif-like region. The interval 105–233 (IKIKGEVFSG…GDFVEVEVIL (129 aa)) is riboflavin kinase. A CDP-binding site is contributed by 114 to 119 (GVGEGR). T143 and N145 together coordinate Mg(2+). FMN contacts are provided by T200 and E208. 213-216 (VKLR) contributes to the CDP binding site.

The protein belongs to the archaeal riboflavin kinase family. Requires Mg(2+) as cofactor.

The catalysed reaction is riboflavin + CTP = CDP + FMN + H(+). The protein operates within cofactor biosynthesis; FMN biosynthesis; FMN from riboflavin (CTP route): step 1/1. Functionally, catalyzes the CTP-dependent phosphorylation of riboflavin (vitamin B2) to form flavin mononucleotide (FMN). This Archaeoglobus fulgidus (strain ATCC 49558 / DSM 4304 / JCM 9628 / NBRC 100126 / VC-16) protein is Riboflavin kinase (ribK).